Consider the following 375-residue polypeptide: Succinyl-diaminopimelate desuccinylase (375 aa).

Position 66 (histidine 66) interacts with Zn(2+). Aspartate 68 is a catalytic residue. Zn(2+) is bound at residue aspartate 99. The Proton acceptor role is filled by glutamate 133. Residues glutamate 134, glutamate 162, and histidine 348 each contribute to the Zn(2+) site.

The protein belongs to the peptidase M20A family. DapE subfamily. As to quaternary structure, homodimer. The cofactor is Zn(2+). Co(2+) serves as cofactor.

The enzyme catalyses N-succinyl-(2S,6S)-2,6-diaminopimelate + H2O = (2S,6S)-2,6-diaminopimelate + succinate. It functions in the pathway amino-acid biosynthesis; L-lysine biosynthesis via DAP pathway; LL-2,6-diaminopimelate from (S)-tetrahydrodipicolinate (succinylase route): step 3/3. Catalyzes the hydrolysis of N-succinyl-L,L-diaminopimelic acid (SDAP), forming succinate and LL-2,6-diaminopimelate (DAP), an intermediate involved in the bacterial biosynthesis of lysine and meso-diaminopimelic acid, an essential component of bacterial cell walls. This Salmonella agona (strain SL483) protein is Succinyl-diaminopimelate desuccinylase.